The following is a 294-amino-acid chain: dTDP-4-dehydrorhamnose reductase (294 aa).

NADH-binding positions include 11-13, 38-39, and 62-64; these read GQL, DI, and AYT. NADPH contacts are provided by residues 12 to 13, 38 to 39, and 62 to 64; these read QL, DI, and AYT. 103 to 104 contacts dTDP-beta-L-rhamnose; that stretch reads TD. Positions 127 and 131 each coordinate NADH. Tyr127 and Lys131 together coordinate NADPH. Residue Tyr127 is the Proton donor/acceptor of the active site. Trp152 provides a ligand contact to dTDP-beta-L-rhamnose.

It belongs to the dTDP-4-dehydrorhamnose reductase family. Homodimer. It depends on Mg(2+) as a cofactor.

It carries out the reaction dTDP-beta-L-rhamnose + NADP(+) = dTDP-4-dehydro-beta-L-rhamnose + NADPH + H(+). The protein operates within carbohydrate biosynthesis; dTDP-L-rhamnose biosynthesis. It functions in the pathway bacterial outer membrane biogenesis; LPS O-antigen biosynthesis. Functionally, involved in the biosynthesis of the dTDP-L-rhamnose which is an important component of lipopolysaccharide (LPS). Catalyzes the reduction of dTDP-6-deoxy-L-lyxo-4-hexulose to yield dTDP-L-rhamnose. The sequence is that of dTDP-4-dehydrorhamnose reductase from Aggregatibacter actinomycetemcomitans (Actinobacillus actinomycetemcomitans).